We begin with the raw amino-acid sequence, 57 residues long: Large ribosomal subunit protein bL32c (57 aa).

Belongs to the bacterial ribosomal protein bL32 family.

It is found in the plastid. It localises to the chloroplast. This Amborella trichopoda protein is Large ribosomal subunit protein bL32c.